Here is a 206-residue protein sequence, read N- to C-terminus: N-(5'-phosphoribosyl)anthranilate isomerase (206 aa).

This sequence belongs to the TrpF family.

It catalyses the reaction N-(5-phospho-beta-D-ribosyl)anthranilate = 1-(2-carboxyphenylamino)-1-deoxy-D-ribulose 5-phosphate. It participates in amino-acid biosynthesis; L-tryptophan biosynthesis; L-tryptophan from chorismate: step 3/5. The chain is N-(5'-phosphoribosyl)anthranilate isomerase from Pseudomonas putida (strain ATCC 47054 / DSM 6125 / CFBP 8728 / NCIMB 11950 / KT2440).